Consider the following 415-residue polypeptide: 3-isopropylmalate dehydratase large subunit (415 aa).

3 residues coordinate [4Fe-4S] cluster: Cys-295, Cys-353, and Cys-356.

This sequence belongs to the aconitase/IPM isomerase family. LeuC type 2 subfamily. As to quaternary structure, heterodimer of LeuC and LeuD. [4Fe-4S] cluster is required as a cofactor.

It carries out the reaction (2R,3S)-3-isopropylmalate = (2S)-2-isopropylmalate. It participates in amino-acid biosynthesis; L-leucine biosynthesis; L-leucine from 3-methyl-2-oxobutanoate: step 2/4. In terms of biological role, catalyzes the isomerization between 2-isopropylmalate and 3-isopropylmalate, via the formation of 2-isopropylmaleate. The sequence is that of 3-isopropylmalate dehydratase large subunit from Pyrobaculum aerophilum (strain ATCC 51768 / DSM 7523 / JCM 9630 / CIP 104966 / NBRC 100827 / IM2).